The following is a 144-amino-acid chain: Large ribosomal subunit protein uL16 (144 aa).

Belongs to the universal ribosomal protein uL16 family. Part of the 50S ribosomal subunit.

Its function is as follows. Binds 23S rRNA and is also seen to make contacts with the A and possibly P site tRNAs. In Bacillus pumilus (strain SAFR-032), this protein is Large ribosomal subunit protein uL16.